A 62-amino-acid polypeptide reads, in one-letter code: Alpha-conotoxin-like Bn1.3 (62 aa).

The first 18 residues, M1 to A18, serve as a signal peptide directing secretion. A propeptide spanning residues V19 to R48 is cleaved from the precursor. Intrachain disulfides connect C51-C57 and C52-C61. A Cysteine amide modification is found at C61.

Belongs to the conotoxin A superfamily. Expressed by the venom duct.

It localises to the secreted. Does not show activity on the acetylcholine receptors tested. This Conus bandanus (Banded marble cone) protein is Alpha-conotoxin-like Bn1.3.